Here is a 113-residue protein sequence, read N- to C-terminus: PTS system fructose-like EIIB component 3 (113 aa).

The PTS EIIB type-2 domain maps to 1 to 100 (MAYLVAVTAC…PQRVMSAVRK (100 aa)). The active-site Phosphocysteine intermediate is the cysteine 10. A Phosphocysteine; by EIIA modification is found at cysteine 10.

It localises to the cytoplasm. The catalysed reaction is D-fructose(out) + N(pros)-phospho-L-histidyl-[protein] = D-fructose 1-phosphate(in) + L-histidyl-[protein]. In terms of biological role, the phosphoenolpyruvate-dependent sugar phosphotransferase system (sugar PTS), a major carbohydrate active transport system, catalyzes the phosphorylation of incoming sugar substrates concomitantly with their translocation across the cell membrane. The polypeptide is PTS system fructose-like EIIB component 3 (frwD) (Escherichia coli (strain K12)).